Here is a 170-residue protein sequence, read N- to C-terminus: MDEMIRRAIDESIAEVAVATGSDIYLVEADVRGGGRIIELTIEADKGVSIDQCAKLSRTIRARLEACEENLMLAAGDFELMVSSPGIGEPIRVSRQYLRHLGRKMKVVYLDSEGERKEIEGKLTEASLEGEEPSITIEPVVKGKKKKTSGREPLTLRLADVVKAVVQTEW.

This sequence belongs to the RimP family.

It is found in the cytoplasm. Functionally, required for maturation of 30S ribosomal subunits. This is Ribosome maturation factor RimP from Chlorobaculum parvum (strain DSM 263 / NCIMB 8327) (Chlorobium vibrioforme subsp. thiosulfatophilum).